Reading from the N-terminus, the 490-residue chain is RNA-binding protein P (490 aa).

The segment at 1–112 (MGKKRKLDSK…EEEEAAERDA (112 aa)) is disordered. A compositionally biased stretch (low complexity) spans 13-36 (AAARSAAARAAAAAAAAAAAAAVA). Residues 74–108 (GGEEEEVEEVEVEEEVEVDEDEDGEGEGEEEEEAA) are compositionally biased toward acidic residues. RRM domains lie at 156–233 (RKIF…LASV) and 267–343 (RKIF…QKAI).

As to quaternary structure, forms homodimers. Interacts with RBP-L and RBP-208. Interacts with NSF.

The protein localises to the nucleus. The protein resides in the cytoplasm. Functionally, RNA-binding protein that binds to a cis-localization element or zipcode, within the 5'-CDS of prolamine RNA. Binds strongly to glutelin mRNA, particularly to 3'-UTR and zipcode RNA. Recognizes and binds to glutelin zipcode RNA, which is required for proper mRNA localization to cisternal endoplasmic reticulum. Exhibits strong binding activity to a glutelin intron sequence and may participate in mRNA splicing. Required for the correct localization of glutelin and prolamine mRNA in endosperm cells during grain development. RBP-P and RBP-L form a quaternary complex with the membrane trafficking factors NSF and RAB5A. This quaternay complex carries glutelin mRNAs for active transport on endosomes to the cortical endoplasmic reticulum membrane, and enables endosome-mediated glutelin mRNA transport in endosperm cells. The polypeptide is RNA-binding protein P (Oryza sativa subsp. japonica (Rice)).